The chain runs to 578 residues: MTLFILTETSAGYALLKAKDKKLLKRDDLATEAATAEGVSNLVKLKSFQKFDSAATALEEVASLVEGKVTPRLASLLDEVKDEKKVSLAVADPKLGNAIGKLPGLDIQLIADSTTTDIYRAIREHLPTLIPGLAPQDMSTMSLGLSHSLARHKLKFSPDKIDTMIVQAIGLLDDLDKELNNYAMRVKEWYGWHFPELAKILNDNLAYAKLVLKMGMRTNWESSDLAEILPEELEGSVKAAADRSMGTEISEEDLENIQALAEQVVGFTEYRQQLAGYLTARMNAIAPNLTALVGELVGARLIAHAGSLTNLSKSPASTLQILGAEKALFRALKTKHDTPKYGLIYHASLIGQATGKNKGKMARVLAAKASLGIRVDALAEWDEDATEEDKAALGIEARFNLERKLAGMEGKPLKPRGVTIAPNGTPAQAKKFELNEARKYNADADAVDEPSSAKKQKKLVEEVQDTEMADADSDAEADSSDESEEESSKKKSKKSKDADLEKMAEKAGLSLKRYKRKLERGEIEFDAEGNPSSISKKDLKKAKKEAKKADKGEEKKRKRSDDNEDNEKKQKKKKKKDE.

The Nop domain occupies 285–410 (IAPNLTALVG…LERKLAGMEG (126 aa)). The interval 443 to 578 (DADAVDEPSS…KQKKKKKKDE (136 aa)) is disordered. Over residues 462–485 (EVQDTEMADADSDAEADSSDESEE) the composition is skewed to acidic residues. Basic and acidic residues-rich tracts occupy residues 495-505 (SKDADLEKMAE) and 547-561 (KKAD…KRSD). Basic residues predominate over residues 569-578 (KQKKKKKKDE).

This sequence belongs to the NOP5/NOP56 family.

The protein localises to the nucleus. It is found in the nucleolus. In terms of biological role, required for pre-18S rRNA processing. May bind microtubules. This is Nucleolar protein 58 (nop58) from Aspergillus oryzae (strain ATCC 42149 / RIB 40) (Yellow koji mold).